The primary structure comprises 290 residues: 33 kDa chaperonin (290 aa).

2 disulfide bridges follow: cysteine 235-cysteine 237 and cysteine 268-cysteine 271.

Belongs to the HSP33 family. Post-translationally, under oxidizing conditions two disulfide bonds are formed involving the reactive cysteines. Under reducing conditions zinc is bound to the reactive cysteines and the protein is inactive.

It is found in the cytoplasm. In terms of biological role, redox regulated molecular chaperone. Protects both thermally unfolding and oxidatively damaged proteins from irreversible aggregation. Plays an important role in the bacterial defense system toward oxidative stress. The polypeptide is 33 kDa chaperonin (Streptococcus pyogenes serotype M5 (strain Manfredo)).